A 224-amino-acid polypeptide reads, in one-letter code: Triosephosphate isomerase (224 aa).

Asn9–Lys11 lines the substrate pocket. His93 acts as the Electrophile in catalysis. Glu141 acts as the Proton acceptor in catalysis. Substrate is bound by residues Ile146, Gly181, and Ala202–Ser203.

It belongs to the triosephosphate isomerase family. In terms of assembly, homotetramer; dimer of dimers.

It is found in the cytoplasm. It catalyses the reaction D-glyceraldehyde 3-phosphate = dihydroxyacetone phosphate. It participates in carbohydrate biosynthesis; gluconeogenesis. The protein operates within carbohydrate degradation; glycolysis; D-glyceraldehyde 3-phosphate from glycerone phosphate: step 1/1. In terms of biological role, involved in the gluconeogenesis. Catalyzes stereospecifically the conversion of dihydroxyacetone phosphate (DHAP) to D-glyceraldehyde-3-phosphate (G3P). In Pyrobaculum arsenaticum (strain DSM 13514 / JCM 11321 / PZ6), this protein is Triosephosphate isomerase.